The following is a 178-amino-acid chain: Conodipine-P3 (178 aa).

The first 24 residues, 1–24, serve as a signal peptide directing secretion; the sequence is MKLLAPVLWAMAALGVTWLVAVDS. Pro38 carries the 4-hydroxyproline modification. 4-hydroxyproline; partial is present on residues Pro42 and Pro49. Residue His54 is part of the active site. The propeptide at 98 to 130 is interchain peptide; the sequence is KREVTSHRATSIAHSRLWKTALDQKSFLNRKAR. Gln131 is modified (pyrrolidone carboxylic acid). At Pro137 the chain carries 4-hydroxyproline; partial.

Belongs to the phospholipase A2 family. Group IX subfamily. As to quaternary structure, heterodimer of an alpha and a beta chain; probably disulfide-linked. Ca(2+) is required as a cofactor. In terms of tissue distribution, expressed by the venom duct.

It is found in the secreted. It catalyses the reaction a 1,2-diacyl-sn-glycero-3-phosphocholine + H2O = a 1-acyl-sn-glycero-3-phosphocholine + a fatty acid + H(+). In terms of biological role, catalyzes the calcium-dependent hydrolysis of the 2-acyl groups in 3-sn-phosphoglycerides. The chain is Conodipine-P3 from Conus purpurascens (Purple cone).